A 322-amino-acid polypeptide reads, in one-letter code: GRB2-related adaptor protein 2 (322 aa).

An SH3 1 domain is found at 1 to 56; that stretch reads MEATAKFDFMASGEDELSFRTGDILKILSNQEEWLKAELGSQEGYVPKNFIDIEFP. Position 45 is a phosphotyrosine (tyrosine 45). Residues 58–149 form the SH2 domain; that stretch reads WFHEGLSRHQ…QKQVFLRDGT (92 aa). Lysine 106 is modified (N6-acetyllysine). A disordered region spans residues 143 to 216; that stretch reads VFLRDGTQDQ…TPGPQPPQQQ (74 aa). Basic and acidic residues predominate over residues 148 to 163; it reads GTQDQGHRGNSLDRRS. The residue at position 186 (serine 186) is a Phosphoserine. The span at 193–204 shows a compositional bias: low complexity; that stretch reads PQQFHPHQQPSP. Serine 230 carries the post-translational modification Phosphoserine. Threonine 254 carries the phosphothreonine modification. Positions 263 to 322 constitute an SH3 2 domain; the sequence is GRVRWARALYDFEALEEDELGFRSGEVVEVLDSSNPSWWTGRLHNKLGLFPANYVAPMMR.

The protein belongs to the GRB2/sem-5/DRK family. Interacts with phosphorylated LAT and LAX1 upon TCR activation. Interacts with SHB. Interacts with PTPN23. Interacts with phosphorylated LIME1 upon TCR activation.

It localises to the nucleus. It is found in the cytoplasm. Its subcellular location is the endosome. Functionally, interacts with SLP-76 to regulate NF-AT activation. Binds to tyrosine-phosphorylated shc. The chain is GRB2-related adaptor protein 2 (Grap2) from Mus musculus (Mouse).